The following is a 767-amino-acid chain: Polyketide biosynthesis protein PksE (767 aa).

An acyl transferase region spans residues 1-312 (MITYVFPGQG…QRNVQAGITA (312 aa)). Residues Ser87 and His193 contribute to the active site.

In the N-terminal section; belongs to the FabD family.

It localises to the cytoplasm. It catalyses the reaction holo-[ACP] + malonyl-CoA = malonyl-[ACP] + CoA. Its pathway is antibiotic biosynthesis; bacillaene biosynthesis. Its function is as follows. Probably involved in some intermediate steps for the synthesis of the antibiotic polyketide bacillaene which is involved in secondary metabolism. Probably has an acyl transferase activity and could also have a flavin mononucleotide-dependent oxidoreductase activity. This chain is Polyketide biosynthesis protein PksE (pksE), found in Bacillus subtilis (strain 168).